The primary structure comprises 201 residues: Small ribosomal subunit protein uS4B (201 aa).

Residues 93 to 156 (QRLDTVVYRL…RSLAVVRESL (64 aa)) enclose the S4 RNA-binding domain.

This sequence belongs to the universal ribosomal protein uS4 family. In terms of assembly, part of the 30S ribosomal subunit. Contacts protein S5. The interaction surface between S4 and S5 is involved in control of translational fidelity.

In terms of biological role, one of the primary rRNA binding proteins, it binds directly to 16S rRNA where it nucleates assembly of the body of the 30S subunit. Functionally, with S5 and S12 plays an important role in translational accuracy. The protein is Small ribosomal subunit protein uS4B of Symbiobacterium thermophilum (strain DSM 24528 / JCM 14929 / IAM 14863 / T).